Consider the following 220-residue polypeptide: GTP cyclohydrolase 1 (220 aa).

Zn(2+) is bound by residues Cys-109, His-112, and Cys-180.

It belongs to the GTP cyclohydrolase I family. As to quaternary structure, homomer.

It carries out the reaction GTP + H2O = 7,8-dihydroneopterin 3'-triphosphate + formate + H(+). The protein operates within cofactor biosynthesis; 7,8-dihydroneopterin triphosphate biosynthesis; 7,8-dihydroneopterin triphosphate from GTP: step 1/1. This chain is GTP cyclohydrolase 1, found in Pectobacterium carotovorum subsp. carotovorum (strain PC1).